Consider the following 122-residue polypeptide: MPPKVSSKGAKKAGKAKAARSGDKKRKRRRKESYSIYIYKVLKQVHPDTGVSSKAMSIMNSFVNDIFERIAAEASRLAHYNKRSTITSREIQTAVRLLLPGELAKHAVSEGTKAVTKYTSSK.

A disordered region spans residues 1–31 (MPPKVSSKGAKKAGKAKAARSGDKKRKRRRK). Positions 9-31 (GAKKAGKAKAARSGDKKRKRRRK) are enriched in basic residues. S109 carries an O-linked (GlcNAc) serine glycan. K117 is covalently cross-linked (Glycyl lysine isopeptide (Lys-Gly) (interchain with G-Cter in ubiquitin)).

Belongs to the histone H2B family. As to quaternary structure, the nucleosome is a histone octamer containing two molecules each of H2A, H2B, H3 and H4 assembled in one H3-H4 heterotetramer and two H2A-H2B heterodimers. The octamer wraps approximately 147 bp of DNA. Monoubiquitination of Lys-117 gives a specific tag for epigenetic transcriptional activation and is also prerequisite for histone H3 'Lys-4' and 'Lys-79' methylation. In terms of processing, glcNAcylation at Ser-109 promotes monoubiquitination of Lys-117. It fluctuates in response to extracellular glucose, and associates with transcribed genes.

It localises to the nucleus. The protein resides in the chromosome. In terms of biological role, core component of nucleosome. Nucleosomes wrap and compact DNA into chromatin, limiting DNA accessibility to the cellular machineries which require DNA as a template. Histones thereby play a central role in transcription regulation, DNA repair, DNA replication and chromosomal stability. DNA accessibility is regulated via a complex set of post-translational modifications of histones, also called histone code, and nucleosome remodeling. This is Histone H2B, gonadal from Patella granatina (Sandpaper limpet).